The chain runs to 255 residues: 5'-nucleotidase SurE (255 aa).

A divalent metal cation contacts are provided by aspartate 8, aspartate 9, serine 39, and asparagine 91.

Belongs to the SurE nucleotidase family. A divalent metal cation serves as cofactor.

The protein resides in the cytoplasm. The catalysed reaction is a ribonucleoside 5'-phosphate + H2O = a ribonucleoside + phosphate. Functionally, nucleotidase that shows phosphatase activity on nucleoside 5'-monophosphates. This is 5'-nucleotidase SurE from Acinetobacter baylyi (strain ATCC 33305 / BD413 / ADP1).